The primary structure comprises 295 residues: MSNISSVNIKELLDAGVHFGHKTSRWNPKMASYIYGERDDVHIIDLRQSAALMSVALNAIYETVKKDGKVLFVSTKIQASDIIAEYAEKCGQYYVNHRWLGGMLTNWKTIAGSIEKLNKLEKTLENAEALIGYTKKEILDMSRKKEKLLLSLAGIRNLNSKPDLLVVIDTNKEHIAINEAVKLNVPIVAVVDTNSNPDNVDYPIPGNDDSIRSIRLYCRLFADAALQGLEESMKASGVDMGAMHEHTDNALISKNVSKLKQAKKFSKTKNIDEETNTEFEQALNDTDENKNADNA.

The disordered stretch occupies residues Lys264–Ala295.

This sequence belongs to the universal ribosomal protein uS2 family.

This is Small ribosomal subunit protein uS2 from Rickettsia akari (strain Hartford).